Consider the following 308-residue polypeptide: Ribosomal RNA large subunit methyltransferase F (308 aa).

This sequence belongs to the methyltransferase superfamily. METTL16/RlmF family.

The protein resides in the cytoplasm. The catalysed reaction is adenosine(1618) in 23S rRNA + S-adenosyl-L-methionine = N(6)-methyladenosine(1618) in 23S rRNA + S-adenosyl-L-homocysteine + H(+). In terms of biological role, specifically methylates the adenine in position 1618 of 23S rRNA. This Salmonella agona (strain SL483) protein is Ribosomal RNA large subunit methyltransferase F.